The primary structure comprises 407 residues: Acetate kinase (407 aa).

Mg(2+) is bound at residue Asn10. Lys17 serves as a coordination point for ATP. A substrate-binding site is contributed by Arg93. Asp150 serves as the catalytic Proton donor/acceptor. ATP is bound by residues 210 to 214, 284 to 286, and 332 to 336; these read HLGNG, DMR, and GVGEN. Glu386 is a binding site for Mg(2+).

Belongs to the acetokinase family. In terms of assembly, homodimer. Mg(2+) serves as cofactor. Requires Mn(2+) as cofactor.

It is found in the cytoplasm. The enzyme catalyses acetate + ATP = acetyl phosphate + ADP. Its pathway is metabolic intermediate biosynthesis; acetyl-CoA biosynthesis; acetyl-CoA from acetate: step 1/2. Functionally, catalyzes the formation of acetyl phosphate from acetate and ATP. Can also catalyze the reverse reaction. This Streptomyces coelicolor (strain ATCC BAA-471 / A3(2) / M145) protein is Acetate kinase.